We begin with the raw amino-acid sequence, 155 residues long: MLKQVEIFTDGSCLGNPGPGGYGAILRYKQTEKTFSAGFRLTTNNRMEMMAAIVALEALTTPCEVTLSTDSQYVRQGITTWIHNWKKRGWKTADKKPVKNVDLWQRLDLAIQRHTVKWEWVKGHAGHPENERCDVLARDAASNPTQDDVGYKPES.

Residues 1–142 (MLKQVEIFTD…CDVLARDAAS (142 aa)) form the RNase H type-1 domain. Mg(2+)-binding residues include aspartate 10, glutamate 48, aspartate 70, and aspartate 134.

The protein belongs to the RNase H family. As to quaternary structure, monomer. Requires Mg(2+) as cofactor.

It localises to the cytoplasm. The enzyme catalyses Endonucleolytic cleavage to 5'-phosphomonoester.. Functionally, endonuclease that specifically degrades the RNA of RNA-DNA hybrids. The polypeptide is Ribonuclease H (Serratia proteamaculans (strain 568)).